Here is a 183-residue protein sequence, read N- to C-terminus: Oleosin 5 (183 aa).

Positions 1-39 (MADVRTHSHQLQVHPQRQHEGGIKVLYPQSGPSSTQVLA) are polar. 3 consecutive transmembrane segments (helical) span residues 37–57 (VLAVFVGVPIGGTLLTIAGLT), 66–86 (MLAFPLFLIFSPVIVPAAFVI), and 87–107 (GLAMTGFLASGAIGLTGLSSM). The tract at residues 40 to 113 (VFVGVPIGGT…LSSMSWVLNY (74 aa)) is hydrophobic. A disordered region spans residues 144 to 183 (KDAGQTIEDKAHDVREAKTFDVRDRDTTKGTHNVRDTKTT).

Belongs to the oleosin family.

It localises to the lipid droplet. The protein resides in the membrane. May have a structural role to stabilize the lipid body during desiccation of the seed by preventing coalescence of the oil. Probably interacts with both lipid and phospholipid moieties of lipid bodies. May also provide recognition signals for specific lipase anchorage in lipolysis during seedling growth. The chain is Oleosin 5 from Arabidopsis thaliana (Mouse-ear cress).